The primary structure comprises 144 residues: MNFKYIVAVSFLIASGYARSEENDVQSLSQREVLEEESLREIRGIGGALLSAGKSALKGLAKGLVEHFANGKRTAEDHEVMKRLKAVMRDLDSLDHPEEASERETRGFNQEEIANLFTKKEKRILGPVLSLVGSALGGLIKKIG.

An N-terminal signal peptide occupies residues 1–18 (MNFKYIVAVSFLIASGYA). The propeptide occupies 19–43 (RSEENDVQSLSQREVLEEESLREIR). An Asparagine amide modification is found at Asn70. A propeptide spanning residues 74–123 (TAEDHEVMKRLKAVMRDLDSLDHPEEASERETRGFNQEEIANLFTKKEKR) is cleaved from the precursor. Ile143 carries the isoleucine amide modification.

It belongs to the bombinin family. In terms of tissue distribution, expressed by the skin glands.

It localises to the secreted. Its function is as follows. Maximin-z shows antimicrobial activity against bacteria and against the fungus C.albicans. It has little hemolytic activity. Functionally, maximin-Hv shows antimicrobial activity against bacteria and against the fungus C.albicans. Shows strong hemolytic activity. The chain is Maximins z/Hv from Bombina maxima (Giant fire-bellied toad).